The sequence spans 314 residues: Ribonuclease Z (314 aa).

H60, H62, D64, H65, H140, D209, and H269 together coordinate Zn(2+). Catalysis depends on D64, which acts as the Proton acceptor.

It belongs to the RNase Z family. Homodimer. Zn(2+) is required as a cofactor.

It catalyses the reaction Endonucleolytic cleavage of RNA, removing extra 3' nucleotides from tRNA precursor, generating 3' termini of tRNAs. A 3'-hydroxy group is left at the tRNA terminus and a 5'-phosphoryl group is left at the trailer molecule.. Its function is as follows. Zinc phosphodiesterase, which displays some tRNA 3'-processing endonuclease activity. Probably involved in tRNA maturation, by removing a 3'-trailer from precursor tRNA. This chain is Ribonuclease Z, found in Methanococcus maripaludis (strain C5 / ATCC BAA-1333).